We begin with the raw amino-acid sequence, 217 residues long: 7-cyano-7-deazaguanine synthase (217 aa).

Phenylalanine 10–leucine 20 contributes to the ATP binding site. Residues cysteine 185, cysteine 194, cysteine 197, and cysteine 200 each coordinate Zn(2+).

This sequence belongs to the QueC family. Homodimer. Requires Zn(2+) as cofactor.

The enzyme catalyses 7-carboxy-7-deazaguanine + NH4(+) + ATP = 7-cyano-7-deazaguanine + ADP + phosphate + H2O + H(+). Its pathway is purine metabolism; 7-cyano-7-deazaguanine biosynthesis. Its function is as follows. Catalyzes the ATP-dependent conversion of 7-carboxy-7-deazaguanine (CDG) to 7-cyano-7-deazaguanine (preQ(0)). The chain is 7-cyano-7-deazaguanine synthase from Streptococcus mutans serotype c (strain ATCC 700610 / UA159).